The following is a 265-amino-acid chain: Reduced viability upon starvation protein 161 (265 aa).

In terms of domain architecture, BAR spans H15–A239. Positions Y126–L193 form a coiled coil.

The protein localises to the cytoplasm. Its subcellular location is the cytoskeleton. Its function is as follows. Component of a cytoskeletal structure that is required for the formation of endocytic vesicles at the plasma membrane level. This chain is Reduced viability upon starvation protein 161 (RVS161), found in Saccharomyces cerevisiae (strain ATCC 204508 / S288c) (Baker's yeast).